The chain runs to 117 residues: Ribosome-binding factor A (117 aa).

It belongs to the RbfA family. Monomer. Binds 30S ribosomal subunits, but not 50S ribosomal subunits or 70S ribosomes.

It localises to the cytoplasm. One of several proteins that assist in the late maturation steps of the functional core of the 30S ribosomal subunit. Associates with free 30S ribosomal subunits (but not with 30S subunits that are part of 70S ribosomes or polysomes). Required for efficient processing of 16S rRNA. May interact with the 5'-terminal helix region of 16S rRNA. The polypeptide is Ribosome-binding factor A (Lacticaseibacillus casei (strain BL23) (Lactobacillus casei)).